Consider the following 154-residue polypeptide: Protein X (154 aa).

The segment at Pro-68 to Phe-117 is mitochondrial targeting sequence.

This sequence belongs to the orthohepadnavirus protein X family. In terms of assembly, may form homodimer. May interact with host CEBPA, CFLAR, CREB1, DDB1, E4F1, HBXIP, HSPD1/HSP60, NFKBIA, POLR2E and SMAD4. Interacts with host SMC5-SMC6 complex and induces its degradation. Interacts with host TRPC4AP; leading to prevent ubiquitination of TRPC4AP. Interacts with host PLSCR1; this interaction promotes ubiquitination and degradation of HBx and impairs HBx-mediated cell proliferation. Post-translationally, a fraction may be phosphorylated in insect cells and HepG2 cells, a human hepatoblastoma cell line. Phosphorylated in vitro by host protein kinase C or mitogen-activated protein kinase. N-acetylated in insect cells.

It is found in the host cytoplasm. The protein resides in the host nucleus. Its subcellular location is the host mitochondrion. Its function is as follows. Multifunctional protein that plays a role in silencing host antiviral defenses and promoting viral transcription. Does not seem to be essential for HBV infection. May be directly involved in development of cirrhosis and liver cancer (hepatocellular carcinoma). Most of cytosolic activities involve modulation of cytosolic calcium. The effect on apoptosis is controversial depending on the cell types in which the studies have been conducted. May induce apoptosis by localizing in mitochondria and causing loss of mitochondrial membrane potential. May also modulate apoptosis by binding host CFLAR, a key regulator of the death-inducing signaling complex (DISC). Promotes viral transcription by using the host E3 ubiquitin ligase DDB1 to target the SMC5-SMC6 complex to proteasomal degradation. This host complex would otherwise bind to viral episomal DNA, and prevents its transcription. Moderately stimulates transcription of many different viral and cellular transcription elements. Promoters and enhancers stimulated by HBx contain DNA binding sites for NF-kappa-B, AP-1, AP-2, c-EBP, ATF/CREB, or the calcium-activated factor NF-AT. The chain is Protein X from Hepatitis B virus genotype D subtype ayw (isolate France/Tiollais/1979) (HBV-D).